We begin with the raw amino-acid sequence, 566 residues long: OTU domain-containing protein 5 (566 aa).

Disordered stretches follow at residues 1 to 117 (MTIL…GDAL) and 146 to 175 (PGHSKRRRQAPGVGAVGGASPEREEVGAGY). Over residues 11–30 (PPDADPANEPPPPGPLPPAP) the composition is skewed to pro residues. Positions 32–47 (RGGGVGVGGGGTGVGG) are enriched in gly residues. The span at 63–75 (ASPPPQGPLPGPP) shows a compositional bias: pro residues. Residue Ser-64 is modified to Phosphoserine. A compositionally biased stretch (low complexity) spans 84–97 (AVPPGAVAGPRPQQ). Residues 105–115 (GPGGPGGGPGD) show a composition bias toward gly residues. The residue at position 165 (Ser-165) is a Phosphoserine. Tyr-175 is subject to Phosphotyrosine. Ser-177 bears the Phosphoserine mark. At Thr-195 the chain carries Phosphothreonine. The 124-residue stretch at 213 to 336 (FIIKQMKEDG…NIHYNSVVNP (124 aa)) folds into the OTU domain. Residues 218–224 (MKEDGAC) are cys-loop. Residue Asp-221 is part of the active site. The active-site Nucleophile is the Cys-224. Residues 273–283 (KRKNNCHGNHI) form a variable-loop region. Ser-323 is subject to Phosphoserine. The interval 324–329 (YHRNIH) is his-loop. The active site involves His-329. A phosphoserine mark is found at Ser-332 and Ser-370. A disordered region spans residues 413–497 (ARQVRGPSQP…PGTSSQFSAG (85 aa)). Composition is skewed to low complexity over residues 425–438 (ASATCSSATAAASS) and 445–457 (SRSPRQRSSASSP). Ser-447 carries the post-translational modification Phosphoserine. Thr-502 is modified (phosphothreonine). Ser-503 bears the Phosphoserine mark.

The protein belongs to the peptidase C85 family. Interacts with TRAF3. Phosphorylation at Ser-177 is required for deubiquitinating activity. Phosphorylation at Ser-323, Ser-332 and Ser-503 by MTOR promotes its activity.

It localises to the nucleus. The catalysed reaction is Thiol-dependent hydrolysis of ester, thioester, amide, peptide and isopeptide bonds formed by the C-terminal Gly of ubiquitin (a 76-residue protein attached to proteins as an intracellular targeting signal).. Inhibited by N-ethyl-maleimide (NEM). In terms of biological role, deubiquitinating enzyme that functions as a negative regulator of the innate immune system. Has peptidase activity towards 'Lys-48'- and 'Lys-63'-linked polyubiquitin chains. Can also cleave 'Lys-11'-linked ubiquitin chains (in vitro). Acts via TRAF3 deubiquitination and subsequent suppression of type I interferon (IFN) production. Controls neuroectodermal differentiation through cleaving 'Lys-48'-linked ubiquitin chains to counteract degradation of select chromatin regulators such as ARID1A, HDAC2 and HCF1. Acts as a positive regulator of mTORC1 and mTORC2 signaling following phosphorylation by MTOR: acts by mediating deubiquitination of BTRC, leading to its stability. The protein is OTU domain-containing protein 5 of Rattus norvegicus (Rat).